Consider the following 239-residue polypeptide: tRNA (guanine-N(7)-)-methyltransferase (239 aa).

S-adenosyl-L-methionine is bound by residues Glu-69, Glu-94, Asp-121, and Asp-144. Asp-144 is an active-site residue. Substrate is bound at residue Lys-148. The interaction with RNA stretch occupies residues 150-155 (RHNKRR). Residues Asp-180 and 217-220 (TKFE) contribute to the substrate site.

Belongs to the class I-like SAM-binding methyltransferase superfamily. TrmB family. As to quaternary structure, monomer.

It carries out the reaction guanosine(46) in tRNA + S-adenosyl-L-methionine = N(7)-methylguanosine(46) in tRNA + S-adenosyl-L-homocysteine. The protein operates within tRNA modification; N(7)-methylguanine-tRNA biosynthesis. Its function is as follows. Catalyzes the formation of N(7)-methylguanine at position 46 (m7G46) in tRNA. The protein is tRNA (guanine-N(7)-)-methyltransferase of Sodalis glossinidius (strain morsitans).